A 108-amino-acid chain; its full sequence is Large ribosomal subunit protein uL24 (108 aa).

The protein belongs to the universal ribosomal protein uL24 family. In terms of assembly, part of the 50S ribosomal subunit.

Functionally, one of two assembly initiator proteins, it binds directly to the 5'-end of the 23S rRNA, where it nucleates assembly of the 50S subunit. Its function is as follows. One of the proteins that surrounds the polypeptide exit tunnel on the outside of the subunit. The protein is Large ribosomal subunit protein uL24 of Trichlorobacter lovleyi (strain ATCC BAA-1151 / DSM 17278 / SZ) (Geobacter lovleyi).